The following is a 126-amino-acid chain: Small ribosomal subunit protein bS6 (126 aa).

The interval Leu-103–Glu-126 is disordered. Positions Leu-115 to Glu-126 are enriched in acidic residues.

It belongs to the bacterial ribosomal protein bS6 family.

Binds together with bS18 to 16S ribosomal RNA. This Glaesserella parasuis serovar 5 (strain SH0165) (Haemophilus parasuis) protein is Small ribosomal subunit protein bS6.